A 344-amino-acid chain; its full sequence is Tripartite motif-containing protein 44 (344 aa).

Disordered stretches follow at residues 1–25 (MASGVGAAFEELPHDGTCDECEPDE) and 68–165 (TPPA…EFDP). Residues 75-92 (GAGKEEAEVKVEQEREIE) show a composition bias toward basic and acidic residues. Positions 93 to 165 (SEAGEESESE…ETEAESEFDP (73 aa)) are enriched in acidic residues. A B box-type zinc finger spans residues 174–215 (VAKRKCPDHGLDLSTYCQEDRQLICVLCPVIGAHQGHQLSTL). Residues Cys179, His182, Cys201, and His207 each contribute to the Zn(2+) site. A coiled-coil region spans residues 290–325 (AHVTEILADIQSHMDRLMTQMAQAKEQLDTSNESAE). A disordered region spans residues 309-344 (QMAQAKEQLDTSNESAEPKAEGDEEGPSGASEEEDT). Acidic residues predominate over residues 330–344 (GDEEGPSGASEEEDT). Phosphoserine is present on residues Ser336 and Ser339.

As to quaternary structure, interacts (via coiled coil) with TRIM17 (via coiled coil).

Functionally, may play a role in the process of differentiation and maturation of neuronal cells. May regulate the activity of TRIM17. Is a negative regulator of PAX6 expression. The sequence is that of Tripartite motif-containing protein 44 (TRIM44) from Pongo abelii (Sumatran orangutan).